Reading from the N-terminus, the 279-residue chain is Oxygen-dependent coproporphyrinogen-III oxidase (279 aa).

Position 102 (S102) interacts with substrate. A divalent metal cation is bound by residues H106 and H116. H116 (proton donor) is an active-site residue. 118–120 (NTR) contributes to the substrate binding site. A divalent metal cation is bound by residues H149 and H179. An important for dimerization region spans residues 244–279 (YVEFNLLYDRGTKFGLMTDGNVEAILMSLPPEVKWA).

The protein belongs to the aerobic coproporphyrinogen-III oxidase family. In terms of assembly, homodimer. The cofactor is a divalent metal cation.

It is found in the cytoplasm. The catalysed reaction is coproporphyrinogen III + O2 + 2 H(+) = protoporphyrinogen IX + 2 CO2 + 2 H2O. Its pathway is porphyrin-containing compound metabolism; protoporphyrin-IX biosynthesis; protoporphyrinogen-IX from coproporphyrinogen-III (O2 route): step 1/1. Its function is as follows. Involved in the heme biosynthesis. Catalyzes the aerobic oxidative decarboxylation of propionate groups of rings A and B of coproporphyrinogen-III to yield the vinyl groups in protoporphyrinogen-IX. The polypeptide is Oxygen-dependent coproporphyrinogen-III oxidase (Rickettsia bellii (strain RML369-C)).